The following is a 194-amino-acid chain: MEKSHFFAHLARMNLIQRWPLMRSVSTENISEHSLQVAFVAHALALIKNKKFDGNTNPERIALLGMFHDTSEVLTGDMPTPIKYYNPAIAEEYKKIELAAEQKLLSMLPEEFQEDYAPLLDSHCINKDDYVIVKQADSLCAYLKCLEELNAGNHEFAQAKKRLEKTLQTRSTPEMEYFLNTFVESFNLTLDEIS.

Residues 18–19 (RW) and H33 contribute to the substrate site. The HD domain maps to 30–142 (ISEHSLQVAF…VKQADSLCAY (113 aa)). Residues H33, H68, and D69 each coordinate a divalent metal cation. Substrate-binding positions include D69, 77 to 80 (DMPT), and D137. Residue D137 participates in a divalent metal cation binding.

This sequence belongs to the 5DNU family. Homodimer. A divalent metal cation serves as cofactor.

It is found in the cytoplasm. The catalysed reaction is a 2'-deoxyribonucleoside 5'-phosphate + H2O = a 2'-deoxyribonucleoside + phosphate. Its function is as follows. Catalyzes the strictly specific dephosphorylation of 2'-deoxyribonucleoside 5'-monophosphates. This Photobacterium profundum (strain SS9) protein is 5'-deoxynucleotidase PBPRA2627.